Consider the following 93-residue polypeptide: Sec-independent protein translocase protein TatA (93 aa).

Residues 1–21 (MGNVFSGWHLLVILLVIVLLF) traverse the membrane as a helical segment. The disordered stretch occupies residues 49–93 (DITRSQDGHPDSQGNFAESASSVPFVKSEKQSEKRASVTEAKKSK). A compositionally biased stretch (polar residues) spans 60 to 70 (SQGNFAESASS). The span at 75–93 (KSEKQSEKRASVTEAKKSK) shows a compositional bias: basic and acidic residues.

Belongs to the TatA/E family. As to quaternary structure, the Tat system comprises two distinct complexes: a TatABC complex, containing multiple copies of TatA, TatB and TatC subunits, and a separate TatA complex, containing only TatA subunits. Substrates initially bind to the TatABC complex, which probably triggers association of the separate TatA complex to form the active translocon.

It is found in the cell membrane. Its function is as follows. Part of the twin-arginine translocation (Tat) system that transports large folded proteins containing a characteristic twin-arginine motif in their signal peptide across membranes. TatA could form the protein-conducting channel of the Tat system. In Tropheryma whipplei (strain TW08/27) (Whipple's bacillus), this protein is Sec-independent protein translocase protein TatA.